Consider the following 441-residue polypeptide: Serine carboxypeptidase-like 4 (441 aa).

A signal peptide spans 1–29 (MANNNVYSVLKSLLLLLHLVFLSKQHVDS). Disulfide bonds link cysteine 88/cysteine 331, cysteine 252/cysteine 266, and cysteine 290/cysteine 297. Asparagine 109 carries an N-linked (GlcNAc...) asparagine glycan. The active site involves serine 184. The N-linked (GlcNAc...) asparagine glycan is linked to asparagine 350. Residue aspartate 366 is part of the active site. Residue asparagine 382 is glycosylated (N-linked (GlcNAc...) asparagine). Residue histidine 419 is part of the active site.

It belongs to the peptidase S10 family. Ubiquitous.

The protein resides in the secreted. Probable carboxypeptidase. The polypeptide is Serine carboxypeptidase-like 4 (SCPL4) (Arabidopsis thaliana (Mouse-ear cress)).